A 161-amino-acid chain; its full sequence is MSSFTHFNDQGRAKMVDISDKKITVRTAIACSSILVTKEIFDKISHNEIGKGDVLAVAQIAGIMAAKRTSDIIPMCHPLLLKGVDVSFDWKQSEEQYRLLIEVKVKTEGSTGVEMEALTAASATALTVYDMCKAVDKGMIIGETYLLEKTGGKNGDYIRNS.

Substrate-binding positions include 75–77 (MCH) and 115–116 (ME). Residue aspartate 130 is part of the active site.

Belongs to the MoaC family. As to quaternary structure, homohexamer; trimer of dimers.

It carries out the reaction (8S)-3',8-cyclo-7,8-dihydroguanosine 5'-triphosphate = cyclic pyranopterin phosphate + diphosphate. Its pathway is cofactor biosynthesis; molybdopterin biosynthesis. Catalyzes the conversion of (8S)-3',8-cyclo-7,8-dihydroguanosine 5'-triphosphate to cyclic pyranopterin monophosphate (cPMP). This chain is Cyclic pyranopterin monophosphate synthase, found in Bacillus mycoides (strain KBAB4) (Bacillus weihenstephanensis).